A 349-amino-acid chain; its full sequence is 5-deoxyribose 1-phosphate isomerase (349 aa).

Substrate-binding positions include R49 to A51, R92, and Q199. D240 acts as the Proton donor in catalysis. N250–K251 is a substrate binding site.

This sequence belongs to the EIF-2B alpha/beta/delta subunits family. DrdI subfamily.

It carries out the reaction 5-deoxy-alpha-D-ribose 1-phosphate = 5-deoxy-D-ribulose 1-phosphate. The protein operates within carbohydrate degradation. Functionally, catalyzes the isomerization of 5-deoxy-alpha-D-ribose 1-phosphate to 5-deoxy-D-ribulose 1-phosphate, as part of a 5-deoxyribose salvage pathway that recycles this toxic radical SAM enzyme by-product to mainstream metabolites. In Clostridium botulinum (strain Loch Maree / Type A3), this protein is 5-deoxyribose 1-phosphate isomerase.